The primary structure comprises 539 residues: Chaperonin GroEL (539 aa).

ATP contacts are provided by residues 30 to 33 (TLGP), lysine 51, 87 to 91 (DGTTT), glycine 415, 479 to 481 (NAA), and aspartate 495.

It belongs to the chaperonin (HSP60) family. In terms of assembly, forms a cylinder of 14 subunits composed of two heptameric rings stacked back-to-back. Interacts with the co-chaperonin GroES.

The protein localises to the cytoplasm. The enzyme catalyses ATP + H2O + a folded polypeptide = ADP + phosphate + an unfolded polypeptide.. Together with its co-chaperonin GroES, plays an essential role in assisting protein folding. The GroEL-GroES system forms a nano-cage that allows encapsulation of the non-native substrate proteins and provides a physical environment optimized to promote and accelerate protein folding. The chain is Chaperonin GroEL from Kluyvera intermedia (Enterobacter intermedius).